A 573-amino-acid polypeptide reads, in one-letter code: 2-succinyl-5-enolpyruvyl-6-hydroxy-3-cyclohexene-1-carboxylate synthase (573 aa).

This sequence belongs to the TPP enzyme family. MenD subfamily. As to quaternary structure, homodimer. Mg(2+) is required as a cofactor. Requires Mn(2+) as cofactor. It depends on thiamine diphosphate as a cofactor.

It carries out the reaction isochorismate + 2-oxoglutarate + H(+) = 5-enolpyruvoyl-6-hydroxy-2-succinyl-cyclohex-3-ene-1-carboxylate + CO2. The protein operates within quinol/quinone metabolism; 1,4-dihydroxy-2-naphthoate biosynthesis; 1,4-dihydroxy-2-naphthoate from chorismate: step 2/7. It participates in quinol/quinone metabolism; menaquinone biosynthesis. Its function is as follows. Catalyzes the thiamine diphosphate-dependent decarboxylation of 2-oxoglutarate and the subsequent addition of the resulting succinic semialdehyde-thiamine pyrophosphate anion to isochorismate to yield 2-succinyl-5-enolpyruvyl-6-hydroxy-3-cyclohexene-1-carboxylate (SEPHCHC). This is 2-succinyl-5-enolpyruvyl-6-hydroxy-3-cyclohexene-1-carboxylate synthase from Shewanella sp. (strain MR-4).